The chain runs to 439 residues: 26S proteasome regulatory subunit 4 homolog (439 aa).

Positions 1 to 46 (MGNNQSQGQGDKGEKKDQPKYQPPPPPTQFGKKKKRRGAETSTKLP) are disordered. 225–232 (GEPGTGKT) lines the ATP pocket.

This sequence belongs to the AAA ATPase family.

Its subcellular location is the cytoplasm. It localises to the nucleus. Its function is as follows. The 26S proteasome is involved in the ATP-dependent degradation of ubiquitinated proteins. The regulatory (or ATPase) complex confers ATP dependency and substrate specificity to the 26S complex. Plays an important role in regulating both growth and multicellular development. The polypeptide is 26S proteasome regulatory subunit 4 homolog (psmC1) (Dictyostelium discoideum (Social amoeba)).